Reading from the N-terminus, the 626-residue chain is MAIFSNQMRLSSTLLKRLHQRVAAAVNSSSSRNFTTTEGHRPTIVHKRSLDILHDPWFNKGTAFSFTERDRLHIRGLLPPNVMSFEQQIARFMADLKRLEVQARDGPSDPYVLAKWRILNRLHDRNETLYYKVLMENIEEYAPIVYTPTVGLVCQKYSGLFRRPRGMYFSAEDRGEMMSMVYNWPADQVDMIVVTDGSRILGLGDLGIQGIGIAIGKLDLYVAAAGINPQRVLPVMIDVGTDNENLLKDPLYLGLQDHRLDGEEYIEVIDEFMEAVFTRWPHVIVQFEDFQSKWAFKLLQRYRNNYRMFNDDIQGTAGVAIAGLLGAVRAQGRPMIDFPKMKIVVAGAGSAGIGVLNAARKTMARMLGNTEIAFESARSQFWVVDAKGLITEARENVDPDARPFARKIKEIERQGLSEGATLAEVVREVKPDVLLGLSACGGLFSKEVLEALKHSTSTRPAIFPMSNPTRNAECTPEEAFSILGENIIFASGSPFKDVDLGNGHVGHCNQANNMFLFPGIGLGTLLSGSRIVSDGMLQAAAECLAAYITEEEVLKGIIYPSISRIRDITKEVAAAVVKEAIEEDLAEGYREMDSRELRKLDEAQISEFVENNMWSPDYPTLVYKKD.

Residues 1–34 (MAIFSNQMRLSSTLLKRLHQRVAAAVNSSSSRNF) constitute a mitochondrion transit peptide. Arg91 and Arg125 together coordinate fumarate. The active-site Proton donor is Tyr146. Arg199 contacts (S)-malate. An NAD(+)-binding site is contributed by Arg199. Lys217 serves as the catalytic Proton acceptor. Residues Glu288, Asp289, and Asp312 each coordinate a divalent metal cation. NAD(+) is bound by residues Ala348 and Ala351. (S)-malate-binding residues include Asn467 and Asn512.

The protein belongs to the malic enzymes family. Heterodimer of two related subunits. Requires Mg(2+) as cofactor. It depends on Mn(2+) as a cofactor.

It is found in the mitochondrion matrix. The enzyme catalyses (S)-malate + NAD(+) = pyruvate + CO2 + NADH. The polypeptide is NAD-dependent malic enzyme, mitochondrial (Solanum tuberosum (Potato)).